Reading from the N-terminus, the 144-residue chain is Large ribosomal subunit protein uL13 (144 aa).

This sequence belongs to the universal ribosomal protein uL13 family. In terms of assembly, part of the 50S ribosomal subunit.

Functionally, this protein is one of the early assembly proteins of the 50S ribosomal subunit, although it is not seen to bind rRNA by itself. It is important during the early stages of 50S assembly. In Clostridium botulinum (strain Alaska E43 / Type E3), this protein is Large ribosomal subunit protein uL13.